The chain runs to 777 residues: Cyclin-F (777 aa).

Positions 20-28 (KRRIKRRPR) match the Nuclear localization signal 1 motif. The F-box domain maps to 29–76 (NLTILSLPEDVLFHILKWLSVGDILAVRAVHSHLKYLVDNHASVWASA). The Cyclin N-terminal domain occupies 288-405 (QASQAVNKQQ…EIISALEGKI (118 aa)). 3 short sequence motifs (d box) span residues 310–313 (RYIL), 343–346 (RRRL), and 349–352 (RYKL). Disordered regions lie at residues 544–591 (QESP…TPTA) and 651–777 (QESS…HLAS). Positions 568–574 (RRSKRKR) match the Nuclear localization signal 2 motif. The PEST stretch occupies residues 582–761 (RGSFVTTPTA…ESGVHQQPVK (180 aa)). Composition is skewed to low complexity over residues 695-708 (SGYS…PISS) and 719-731 (STSV…HSST). A compositionally biased stretch (polar residues) spans 751 to 767 (PESGVHQQPVKRQNLSV). Positions 762–765 (RQNL) match the D box 4 motif. Residues 768-777 (HSDKDMHLAS) show a composition bias toward basic and acidic residues.

It belongs to the cyclin family. Cyclin AB subfamily. As to quaternary structure, component of the SCF(CCNF) complex consisting of CUL1, RBX1, SKP1 and CCNF. Interacts with SKP1. Interacts with CUL1. Interacts with CCNB1; interaction is required for nuclear localization of CCNB1. Interacts with CCP110; this interaction leads to CCP110 ubiquitination and degradation via the proteasome pathway. Interacts (via the Cyclin N-terminal domain) with MYBL2/BMYB. Interacts with FZR1/CDH1 (via N-terminus). Interacts with RRM2 (via Cy motif and when phosphorylated at 'Thr-33'); the interaction occurs exclusively in G2 and early M. Interacts with CDC6 (via Cy motif); the interaction takes place during G2 and M phase. Post-translationally, degraded when the spindle assembly checkpoint is activated during the G2-M transition. Degradation is not dependent on the proteasome or ubiquitin and depends on the C-terminal PEST sequence. In terms of processing, phosphorylated just before cells enter into mitosis. Ubiquitinated by the anaphase-promoting complex (APC/C); leading to its degradation by the proteasome.

It is found in the nucleus. The protein localises to the cytoplasm. It localises to the perinuclear region. Its subcellular location is the cytoskeleton. The protein resides in the microtubule organizing center. It is found in the centrosome. The protein localises to the centriole. Functionally, substrate recognition component of a SCF (SKP1-CUL1-F-box protein) E3 ubiquitin-protein ligase complex which mediates the ubiquitination and subsequent proteasomal degradation of target proteins. The SCF(CCNF) E3 ubiquitin-protein ligase complex is an integral component of the ubiquitin proteasome system (UPS) and links proteasome degradation to the cell cycle. Mediates the substrate recognition and the proteasomal degradation of various target proteins involved in the regulation of cell cycle progression and in the maintenance of genome stability. Mediates the ubiquitination and subsequent proteasomal degradation of CP110 during G2 phase, thereby acting as an inhibitor of centrosome reduplication. In G2, mediates the ubiquitination and proteasomal degradation of CDC6, thereby suppressing DNA re-replication and preventing genome instability. Involved in the ubiquitination and degradation of the substrate adapter CDH1 of the anaphase-promoting complex (APC/C), thereby acting as an antagonist of APC/C in regulating G1 progression and S phase entry. May play a role in the G2 cell cycle checkpoint control after DNA damage, possibly by promoting the ubiquitination of MYBL2/BMYB. This Mus musculus (Mouse) protein is Cyclin-F (Ccnf).